A 336-amino-acid polypeptide reads, in one-letter code: Tryptophan--tRNA ligase 1 (336 aa).

Residues 9–11 (KPT) and 17–18 (GN) each bind ATP. The 'HIGH' region motif lies at 10-18 (PTGHLTLGN). Aspartate 137 contributes to the L-tryptophan binding site. ATP-binding positions include 149-151 (GED), valine 188, and 197-201 (KMGKS). The 'KMSKS' region signature appears at 197-201 (KMGKS).

The protein belongs to the class-I aminoacyl-tRNA synthetase family. In terms of assembly, homodimer.

It is found in the cytoplasm. It catalyses the reaction tRNA(Trp) + L-tryptophan + ATP = L-tryptophyl-tRNA(Trp) + AMP + diphosphate + H(+). Catalyzes the attachment of tryptophan to tRNA(Trp). The sequence is that of Tryptophan--tRNA ligase 1 from Streptomyces coelicolor (strain ATCC BAA-471 / A3(2) / M145).